The chain runs to 171 residues: Transcription factor pcr1 (171 aa).

The region spanning aspartate 10 to histidine 73 is the bZIP domain. The segment at lysine 12–arginine 51 is basic motif. Positions leucine 52–leucine 66 are leucine-zipper. A disordered region spans residues glutamine 125 to isoleucine 171. Residues proline 143–aspartate 152 are compositionally biased toward low complexity.

This sequence belongs to the bZIP family. Heterodimer of pcr1/mts2 and atf1/mts1.

The protein resides in the nucleus. Involved in regulation of gene expression for sexual development. Binds and activates CRE sites (cAMP-response elements, also known as M26 meiotic recombination hotspots). The sequence is that of Transcription factor pcr1 (pcr1) from Schizosaccharomyces pombe (strain 972 / ATCC 24843) (Fission yeast).